Consider the following 65-residue polypeptide: Photosystem II reaction center protein Z (65 aa).

Transmembrane regions (helical) follow at residues 8 to 28 (AVFALVLLSFVLIVAVPVALA) and 41 to 61 (YAGAALWTSLIIVIGVLDSVV).

Belongs to the PsbZ family. PSII is composed of 1 copy each of membrane proteins PsbA, PsbB, PsbC, PsbD, PsbE, PsbF, PsbH, PsbI, PsbJ, PsbK, PsbL, PsbM, PsbT, PsbX, PsbY, PsbZ, Psb30/Ycf12, at least 3 peripheral proteins of the oxygen-evolving complex and a large number of cofactors. It forms dimeric complexes.

It localises to the plastid. Its subcellular location is the cyanelle thylakoid membrane. May control the interaction of photosystem II (PSII) cores with the light-harvesting antenna, regulates electron flow through the 2 photosystem reaction centers. PSII is a light-driven water plastoquinone oxidoreductase, using light energy to abstract electrons from H(2)O, generating a proton gradient subsequently used for ATP formation. The protein is Photosystem II reaction center protein Z of Cyanophora paradoxa.